Reading from the N-terminus, the 431-residue chain is tRNA-2-methylthio-N(6)-dimethylallyladenosine synthase (431 aa).

Positions 2-117 (KKLFIETLGC…ITEVVDKKHA (116 aa)) constitute an MTTase N-terminal domain. [4Fe-4S] cluster-binding residues include cysteine 11, cysteine 48, cysteine 80, cysteine 149, cysteine 153, and cysteine 156. The 234-residue stretch at 135 to 368 (RTNPFKAMVN…QTRHTEILDE (234 aa)) folds into the Radical SAM core domain. In terms of domain architecture, TRAM spans 371 to 431 (DAQLGKVHEV…SRGALDGVLV (61 aa)).

It belongs to the methylthiotransferase family. MiaB subfamily. In terms of assembly, monomer. It depends on [4Fe-4S] cluster as a cofactor.

The protein localises to the cytoplasm. It catalyses the reaction N(6)-dimethylallyladenosine(37) in tRNA + (sulfur carrier)-SH + AH2 + 2 S-adenosyl-L-methionine = 2-methylsulfanyl-N(6)-dimethylallyladenosine(37) in tRNA + (sulfur carrier)-H + 5'-deoxyadenosine + L-methionine + A + S-adenosyl-L-homocysteine + 2 H(+). Its function is as follows. Catalyzes the methylthiolation of N6-(dimethylallyl)adenosine (i(6)A), leading to the formation of 2-methylthio-N6-(dimethylallyl)adenosine (ms(2)i(6)A) at position 37 in tRNAs that read codons beginning with uridine. The polypeptide is tRNA-2-methylthio-N(6)-dimethylallyladenosine synthase (Sulfurovum sp. (strain NBC37-1)).